We begin with the raw amino-acid sequence, 394 residues long: S-adenosylmethionine synthase (394 aa).

Residue H18 participates in ATP binding. D20 is a Mg(2+) binding site. E46 contacts K(+). Positions 59 and 104 each coordinate L-methionine. The flexible loop stretch occupies residues 104–114; sequence QSPDIAQGVDA. ATP is bound by residues 174–176, 240–241, D249, 255–256, A272, and K276; these read DCK, KF, and RK. L-methionine is bound at residue D249. K280 lines the L-methionine pocket.

The protein belongs to the AdoMet synthase family. Homotetramer; dimer of dimers. Mg(2+) serves as cofactor. Requires K(+) as cofactor.

Its subcellular location is the cytoplasm. The enzyme catalyses L-methionine + ATP + H2O = S-adenosyl-L-methionine + phosphate + diphosphate. The protein operates within amino-acid biosynthesis; S-adenosyl-L-methionine biosynthesis; S-adenosyl-L-methionine from L-methionine: step 1/1. Functionally, catalyzes the formation of S-adenosylmethionine (AdoMet) from methionine and ATP. The overall synthetic reaction is composed of two sequential steps, AdoMet formation and the subsequent tripolyphosphate hydrolysis which occurs prior to release of AdoMet from the enzyme. This chain is S-adenosylmethionine synthase, found in Akkermansia muciniphila (strain ATCC BAA-835 / DSM 22959 / JCM 33894 / BCRC 81048 / CCUG 64013 / CIP 107961 / Muc).